A 429-amino-acid polypeptide reads, in one-letter code: Ribosomal RNA small subunit methyltransferase B (429 aa).

S-adenosyl-L-methionine-binding positions include 254 to 260, aspartate 277, aspartate 303, and aspartate 322; that span reads CAAPGGK. Cysteine 375 serves as the catalytic Nucleophile. Positions 397 to 419 are disordered; it reads ALSETGTPDQPGQQNLPGGEEGD. A compositionally biased stretch (polar residues) spans 400–412; the sequence is ETGTPDQPGQQNL.

This sequence belongs to the class I-like SAM-binding methyltransferase superfamily. RsmB/NOP family.

The protein resides in the cytoplasm. It carries out the reaction cytidine(967) in 16S rRNA + S-adenosyl-L-methionine = 5-methylcytidine(967) in 16S rRNA + S-adenosyl-L-homocysteine + H(+). Functionally, specifically methylates the cytosine at position 967 (m5C967) of 16S rRNA. The chain is Ribosomal RNA small subunit methyltransferase B from Salmonella heidelberg (strain SL476).